We begin with the raw amino-acid sequence, 402 residues long: CinA-like protein (402 aa).

The protein belongs to the CinA family.

In Fusobacterium nucleatum subsp. nucleatum (strain ATCC 25586 / DSM 15643 / BCRC 10681 / CIP 101130 / JCM 8532 / KCTC 2640 / LMG 13131 / VPI 4355), this protein is CinA-like protein.